The sequence spans 1065 residues: Leucine-rich repeats and immunoglobulin-like domains protein 2 (1065 aa).

Residues 1-40 form the signal peptide; that stretch reads MAPAPLGVPEEQLLGCRSRVLSRLLFIAQTALLLLPAAGA. In terms of domain architecture, LRRNT spans 41-75; the sequence is GLCPAPCSCRIPLLDCSRRKLPAPSWRALSGLLPP. Residues 41-807 lie on the Extracellular side of the membrane; it reads GLCPAPCSCR…HEDDGWTTVG (767 aa). LRR repeat units follow at residues 76–97, 98–119, 121–142, 145–166, 168–189, 193–214, 216–237, 240–261, 264–285, 288–309, 312–333, 336–357, 360–382, 387–408, and 411–432; these read DTAILDFSHNRLSNWNISLESQ, TLQEVKMNYNELTEIPYFGEPT, NITLLSLVHNIIPEINAQALQF, ALESLDLSSNIISEIKTSSFPR, QLKYLNLSNNRITTLEAGCFDN, SLLVVKLNRNRMSMIPPKIFKL, HLQFLELKRNRIKIVEGLTFQG, SLRSLKMQRNGISKLKDGAFFG, NMEELELEHNNLTRVNKGWLYG, MLQQLYVSQNAIERISPDAWEF, RLSELDLSYNQLTRLDESAFVG, LLERLNLGDNRVTHIADGVFRF, NLQTLDLRNNEISWAIEDASEAF, SLTKLILQGNQIKSITKKAFIG, and SLEHLDLNNNAIMSIQENAFSQ. Asn-91 carries N-linked (GlcNAc...) asparagine glycosylation. The N-linked (GlcNAc...) asparagine glycan is linked to Asn-121. 2 N-linked (GlcNAc...) asparagine glycosylation sites follow: Asn-173 and Asn-189. Asn-274 is a glycosylation site (N-linked (GlcNAc...) asparagine). N-linked (GlcNAc...) asparagine glycans are attached at residues Asn-441, Asn-468, Asn-514, Asn-571, and Asn-589. An LRRCT domain is found at 443-494; sequence SSLLCDCHLKWLLQWLVDNNFQHSVNVSCAHPEWLAGQSILNVDLKDFVCDD. Ig-like C2-type domains follow at residues 498 to 597, 602 to 691, and 696 to 785; these read PQIR…AKLT, PSFL…ASLT, and PSFI…NVIS. A disulfide bridge links Cys-519 with Cys-580. An intrachain disulfide couples Cys-623 to Cys-675. N-linked (GlcNAc...) asparagine glycans are attached at residues Asn-687 and Asn-728. Cys-717 and Cys-766 are joined by a disulfide. A helical membrane pass occupies residues 808 to 828; the sequence is IVIIVVVCCVVGTSLIWVIVI. Residues 829–1065 lie on the Cytoplasmic side of the membrane; the sequence is YHMRRKNEDY…RNIQDGSEGT (237 aa). Tyr-906 bears the Phosphotyrosine mark. Disordered regions lie at residues 963–990 and 1003–1040; these read SANREPSAFPTNHERISEKKLPSTQMSG and ELGLPHPPFSQQPVHESPQLHQNEGLAGREPDCSASSM. Residues 974–983 are compositionally biased toward basic and acidic residues; that stretch reads NHERISEKKL. Over residues 1013 to 1024 the composition is skewed to polar residues; the sequence is QQPVHESPQLHQ.

In terms of tissue distribution, detected in all tissues analyzed.

The protein localises to the cell membrane. It is found in the cytoplasm. The sequence is that of Leucine-rich repeats and immunoglobulin-like domains protein 2 (LRIG2) from Homo sapiens (Human).